A 457-amino-acid polypeptide reads, in one-letter code: UDP-N-acetylmuramate--L-alanine ligase (457 aa).

109-115 (GTDGKTT) provides a ligand contact to ATP.

Belongs to the MurCDEF family.

The protein localises to the cytoplasm. It catalyses the reaction UDP-N-acetyl-alpha-D-muramate + L-alanine + ATP = UDP-N-acetyl-alpha-D-muramoyl-L-alanine + ADP + phosphate + H(+). The protein operates within cell wall biogenesis; peptidoglycan biosynthesis. Cell wall formation. The chain is UDP-N-acetylmuramate--L-alanine ligase from Thermotoga petrophila (strain ATCC BAA-488 / DSM 13995 / JCM 10881 / RKU-1).